An 82-amino-acid polypeptide reads, in one-letter code: Sec-independent protein translocase protein TatA (82 aa).

A helical transmembrane segment spans residues methionine 1 to glycine 21. Positions isoleucine 36–serine 47 are enriched in basic and acidic residues. The disordered stretch occupies residues isoleucine 36–serine 82.

This sequence belongs to the TatA/E family. In terms of assembly, forms a complex with TatC.

The protein localises to the cell membrane. In terms of biological role, part of the twin-arginine translocation (Tat) system that transports large folded proteins containing a characteristic twin-arginine motif in their signal peptide across membranes. TatA could form the protein-conducting channel of the Tat system. This Deinococcus deserti (strain DSM 17065 / CIP 109153 / LMG 22923 / VCD115) protein is Sec-independent protein translocase protein TatA.